We begin with the raw amino-acid sequence, 435 residues long: Putative BTB/POZ domain-containing protein L275 (435 aa).

Positions 80 to 149 (YDGYVYINVG…IKGKQNDNHN (70 aa)) constitute a BTB domain.

This sequence belongs to the mimivirus BTB/WD family.

The protein is Putative BTB/POZ domain-containing protein L275 of Acanthamoeba polyphaga mimivirus (APMV).